The primary structure comprises 427 residues: Enolase (427 aa).

Gln-163 lines the (2R)-2-phosphoglycerate pocket. Glu-205 acts as the Proton donor in catalysis. Positions 242, 285, and 312 each coordinate Mg(2+). Positions 337, 366, 367, and 388 each coordinate (2R)-2-phosphoglycerate. Lys-337 acts as the Proton acceptor in catalysis.

The protein belongs to the enolase family. The cofactor is Mg(2+).

The protein resides in the cytoplasm. It localises to the secreted. The protein localises to the cell surface. The enzyme catalyses (2R)-2-phosphoglycerate = phosphoenolpyruvate + H2O. It functions in the pathway carbohydrate degradation; glycolysis; pyruvate from D-glyceraldehyde 3-phosphate: step 4/5. Its function is as follows. Catalyzes the reversible conversion of 2-phosphoglycerate (2-PG) into phosphoenolpyruvate (PEP). It is essential for the degradation of carbohydrates via glycolysis. The chain is Enolase from Burkholderia multivorans (strain ATCC 17616 / 249).